The following is a 619-amino-acid chain: MSRIARLSDVLINKIAAGEVVERPASVVKELVENAIDAGAGTVRVELDGGGVDRIIVSDDGHGMGRSDAVACLERHATSKLRELDDLFHIDSMGFRGEAIPAIASVSRFTLHSAAANSEVGTRVSVEGGGPPLVEDAPPRTGTVMTVEDLFFNVPARRKFLRRGDTELKHAEEAVVRLALAYPEVGFFASHEGGTLFSSAACPDDPRERIAAALGSTSHPHLFPVEERRLGVAVTGFAASPEFTFNNARGLYTFVNRRYIRDRGLIGTIQRAYQDFLAAGRQPVVVLHIDVDPRAVDVNVHPQKQEVRFADARGVQEALTAALSRMLRAAPWLGSGVEGAAPQAGQPMDAAHYAHAVERFLTRAQEAAWGGPLPTAMDAPGPGPGAPSLGPLGQGARPGALPFAAAVGQAPAFGQAQPQLNEAPPPGYFGALRPLGMLGGRFHVCEGPGGTLVVMDPHAALERARLTGYLRALESGKPPPAPTLFGTTLELPVAAAKALVEGREALSRLGFDVEPFGGTTVALKTVPPGLEGADARSLLEALARALPPKSATLDTVSLAEAVRVMACHAAKQAGAVPLSDAQFRALLGELDRADFHPTCSHGTVVVLEMPLLELERRAR.

It belongs to the DNA mismatch repair MutL/HexB family.

Functionally, this protein is involved in the repair of mismatches in DNA. It is required for dam-dependent methyl-directed DNA mismatch repair. May act as a 'molecular matchmaker', a protein that promotes the formation of a stable complex between two or more DNA-binding proteins in an ATP-dependent manner without itself being part of a final effector complex. This is DNA mismatch repair protein MutL from Myxococcus xanthus (strain DK1622).